A 60-amino-acid chain; its full sequence is Large ribosomal subunit protein uL30 (60 aa).

This sequence belongs to the universal ribosomal protein uL30 family. Part of the 50S ribosomal subunit.

The polypeptide is Large ribosomal subunit protein uL30 (Limosilactobacillus fermentum (strain NBRC 3956 / LMG 18251) (Lactobacillus fermentum)).